Consider the following 430-residue polypeptide: Histidinol dehydrogenase (430 aa).

3 residues coordinate NAD(+): Tyr124, Gln185, and Asn208. Substrate is bound by residues Ser233, Gln255, and His258. Zn(2+) contacts are provided by Gln255 and His258. Catalysis depends on proton acceptor residues Glu324 and His325. 4 residues coordinate substrate: His325, Asp358, Glu412, and His418. Asp358 provides a ligand contact to Zn(2+). His418 is a Zn(2+) binding site.

Belongs to the histidinol dehydrogenase family. The cofactor is Zn(2+).

The catalysed reaction is L-histidinol + 2 NAD(+) + H2O = L-histidine + 2 NADH + 3 H(+). It participates in amino-acid biosynthesis; L-histidine biosynthesis; L-histidine from 5-phospho-alpha-D-ribose 1-diphosphate: step 9/9. Functionally, catalyzes the sequential NAD-dependent oxidations of L-histidinol to L-histidinaldehyde and then to L-histidine. The polypeptide is Histidinol dehydrogenase (Leptospira biflexa serovar Patoc (strain Patoc 1 / Ames)).